The primary structure comprises 60 residues: U1-theraphotoxin-Agm3a (60 aa).

The first 21 residues, 1–21 (MKFSVLVFILGLVLLLALSSA), serve as a signal peptide directing secretion. Positions 22–29 (TEMEENAR) are excised as a propeptide. Intrachain disulfides connect Cys31-Cys45, Cys38-Cys50, and Cys44-Cys57.

This sequence belongs to the neurotoxin 10 (Hwtx-1) family. 63 (VsTx1) subfamily. As to expression, expressed by the venom gland.

It localises to the secreted. Its function is as follows. Inhibits sodium channels Nav1.7/SCN9A and potassium channels Kv11.1/KCNH2. Also binds the voltage-sensor domain of the potassium channel KvAP (from the archaeon Aeropyrum pernix) with very slow apparent binding kinetics and affects channel gating. Reaches its target by dynamically partitioning into anionic or zwitterionic headgroup lipid membranes. May bind to the open state of KvAP. This Acanthoscurria gomesiana (Tarantula spider) protein is U1-theraphotoxin-Agm3a.